The sequence spans 202 residues: LexA repressor (202 aa).

A DNA-binding region (H-T-H motif) is located at residues 28–48; the sequence is RAEIAQRLGFRSPNAAEEHLK. Residues Ser119 and Lys156 each act as for autocatalytic cleavage activity in the active site.

The protein belongs to the peptidase S24 family. As to quaternary structure, homodimer.

It catalyses the reaction Hydrolysis of Ala-|-Gly bond in repressor LexA.. Functionally, represses a number of genes involved in the response to DNA damage (SOS response), including recA and lexA. Binds to the 16 bp palindromic sequence 5'-CTGTATATATATACAG-3'. In the presence of single-stranded DNA, RecA interacts with LexA causing an autocatalytic cleavage which disrupts the DNA-binding part of LexA, leading to derepression of the SOS regulon and eventually DNA repair. The sequence is that of LexA repressor from Edwardsiella ictaluri (strain 93-146).